Here is a 207-residue protein sequence, read N- to C-terminus: FMN-dependent NADH:quinone oxidoreductase 3 (207 aa).

FMN-binding positions include S10 and 16–18; that span reads SIS.

Belongs to the azoreductase type 1 family. As to quaternary structure, homodimer. FMN serves as cofactor.

The enzyme catalyses 2 a quinone + NADH + H(+) = 2 a 1,4-benzosemiquinone + NAD(+). The catalysed reaction is N,N-dimethyl-1,4-phenylenediamine + anthranilate + 2 NAD(+) = 2-(4-dimethylaminophenyl)diazenylbenzoate + 2 NADH + 2 H(+). Functionally, quinone reductase that provides resistance to thiol-specific stress caused by electrophilic quinones. In terms of biological role, also exhibits azoreductase activity. Catalyzes the reductive cleavage of the azo bond in aromatic azo compounds to the corresponding amines. This chain is FMN-dependent NADH:quinone oxidoreductase 3, found in Burkholderia lata (strain ATCC 17760 / DSM 23089 / LMG 22485 / NCIMB 9086 / R18194 / 383).